Here is a 505-residue protein sequence, read N- to C-terminus: L-carnitine/gamma-butyrobetaine antiporter (505 aa).

12 helical membrane passes run 10-30 (IEPK…WLTV), 51-71 (WGWA…WLVF), 92-112 (IFMM…SIEI), 143-163 (GPLP…FFFV), 195-215 (FYLV…TPLV), 231-251 (LDAI…ACGL), 263-283 (SYLS…SFIM), 316-336 (WTVF…IFLA), 347-367 (LCFG…TVLG), 403-423 (LSTA…VTLI), 446-466 (LLVR…LLAL), and 475-495 (AIIA…LSFI).

Belongs to the BCCT transporter (TC 2.A.15) family. CaiT subfamily. In terms of assembly, homotrimer.

It localises to the cell inner membrane. It catalyses the reaction 4-(trimethylamino)butanoate(in) + (R)-carnitine(out) = 4-(trimethylamino)butanoate(out) + (R)-carnitine(in). The protein operates within amine and polyamine metabolism; carnitine metabolism. In terms of biological role, catalyzes the exchange of L-carnitine for gamma-butyrobetaine. The chain is L-carnitine/gamma-butyrobetaine antiporter from Salmonella typhi.